A 94-amino-acid chain; its full sequence is Small ribosomal subunit protein uS19 (94 aa).

It belongs to the universal ribosomal protein uS19 family.

Functionally, protein S19 forms a complex with S13 that binds strongly to the 16S ribosomal RNA. The sequence is that of Small ribosomal subunit protein uS19 from Syntrophomonas wolfei subsp. wolfei (strain DSM 2245B / Goettingen).